A 439-amino-acid polypeptide reads, in one-letter code: ATP-dependent protease ATPase subunit HslU (439 aa).

ATP is bound by residues isoleucine 17, 59–64 (GVGKTE), aspartate 251, glutamate 317, and arginine 389.

Belongs to the ClpX chaperone family. HslU subfamily. A double ring-shaped homohexamer of HslV is capped on each side by a ring-shaped HslU homohexamer. The assembly of the HslU/HslV complex is dependent on binding of ATP.

It localises to the cytoplasm. Its function is as follows. ATPase subunit of a proteasome-like degradation complex; this subunit has chaperone activity. The binding of ATP and its subsequent hydrolysis by HslU are essential for unfolding of protein substrates subsequently hydrolyzed by HslV. HslU recognizes the N-terminal part of its protein substrates and unfolds these before they are guided to HslV for hydrolysis. This Campylobacter jejuni subsp. jejuni serotype O:23/36 (strain 81-176) protein is ATP-dependent protease ATPase subunit HslU.